Reading from the N-terminus, the 288-residue chain is DegV domain-containing protein MYPU_3590 (288 aa).

The DegV domain occupies 3 to 275; sequence IAIVIDSSSG…LGAIAISLVK (273 aa). Hexadecanoate contacts are provided by serine 61 and serine 92.

Its function is as follows. May bind long-chain fatty acids, such as palmitate, and may play a role in lipid transport or fatty acid metabolism. This chain is DegV domain-containing protein MYPU_3590, found in Mycoplasmopsis pulmonis (strain UAB CTIP) (Mycoplasma pulmonis).